The following is a 265-amino-acid chain: Phosphate import ATP-binding protein PstB (265 aa).

Residues 18 to 260 (MECRDCHVYY…PEDPRTESYI (243 aa)) enclose the ABC transporter domain. Residue 50–57 (GPSGCGKS) participates in ATP binding.

The protein belongs to the ABC transporter superfamily. Phosphate importer (TC 3.A.1.7) family. The complex is composed of two ATP-binding proteins (PstB), two transmembrane proteins (PstC and PstA) and a solute-binding protein (PstS).

The protein localises to the cell inner membrane. It catalyses the reaction phosphate(out) + ATP + H2O = ADP + 2 phosphate(in) + H(+). In terms of biological role, part of the ABC transporter complex PstSACB involved in phosphate import. Responsible for energy coupling to the transport system. The polypeptide is Phosphate import ATP-binding protein PstB (Ruegeria pomeroyi (strain ATCC 700808 / DSM 15171 / DSS-3) (Silicibacter pomeroyi)).